A 248-amino-acid chain; its full sequence is 4-hydroxy-tetrahydrodipicolinate reductase (248 aa).

NAD(+) contacts are provided by residues 8–13 (GAKGRV), Asp34, 76–78 (GTT), and 103–106 (APNF). The Proton donor/acceptor role is filled by His133. Residue His134 participates in (S)-2,3,4,5-tetrahydrodipicolinate binding. Lys137 acts as the Proton donor in catalysis. 143–144 (GT) contacts (S)-2,3,4,5-tetrahydrodipicolinate.

It belongs to the DapB family.

The protein resides in the cytoplasm. It catalyses the reaction (S)-2,3,4,5-tetrahydrodipicolinate + NAD(+) + H2O = (2S,4S)-4-hydroxy-2,3,4,5-tetrahydrodipicolinate + NADH + H(+). The enzyme catalyses (S)-2,3,4,5-tetrahydrodipicolinate + NADP(+) + H2O = (2S,4S)-4-hydroxy-2,3,4,5-tetrahydrodipicolinate + NADPH + H(+). It participates in amino-acid biosynthesis; L-lysine biosynthesis via DAP pathway; (S)-tetrahydrodipicolinate from L-aspartate: step 4/4. Catalyzes the conversion of 4-hydroxy-tetrahydrodipicolinate (HTPA) to tetrahydrodipicolinate. The chain is 4-hydroxy-tetrahydrodipicolinate reductase from Corynebacterium urealyticum (strain ATCC 43042 / DSM 7109).